The following is an 843-amino-acid chain: Axin-2 (843 aa).

The tract at residues 1–75 (MSSAMLVTCL…EGRASPDSPL (75 aa)) is disordered. The short motif at 21 to 30 (APRPPVPGEE) is the Tankyrase-binding motif element. Basic and acidic residues predominate over residues 56-69 (RRNEDGLGEPEGRA). The RGS domain occupies 81 to 200 (SLHSLLGDQD…LTSDIYLEYV (120 aa)). Residues 327–413 (VGSKKQLQRE…REGSELTLNS (87 aa)) are interaction with GSK3B. The segment at 334-393 (QREMHRSVKANGQVSLPHFPRTHRLPKEMTPVEPATFAAELISRLEKLKLELESRHSLEE) is interaction with SIAH1 and SIAH2. Disordered regions lie at residues 396 to 435 (QQIR…EEDP), 447 to 494 (LKTP…AASP), 561 to 674 (APET…RTTP), and 718 to 748 (ASQQ…EDHK). The tract at residues 413–476 (SREGAPTQHP…PDHHHHHHSQ (64 aa)) is interaction with beta-catenin. 2 stretches are compositionally biased toward low complexity: residues 477–494 (YHSL…AASP) and 588–597 (PGLALPAREG). Positions 727–741 (SATVQTGATPFSNPS) are enriched in polar residues. The DIX domain maps to 761-843 (ASELVVTYFF…RILGKVERID (83 aa)).

As to quaternary structure, interacts with glycogen synthase kinase-3 beta (GSK3B) and beta-catenin. The interaction between axin and beta-catenin occurs via the armadillo repeats contained in beta-catenin. Interacts with SMAD7 and RNF111. Interacts with ANKRD6. Interacts with SIAH1. Interacts with SIAH2. In terms of processing, probably phosphorylated by GSK3B and dephosphorylated by PP2A. ADP-ribosylated by tankyrase TNKS and TNKS2. Poly-ADP-ribosylated protein is recognized by RNF146, followed by ubiquitination and subsequent activation of the Wnt signaling pathway. Post-translationally, ubiquitinated by RNF146 when poly-ADP-ribosylated, leading to its degradation and subsequent activation of the Wnt signaling pathway. Deubiquitinated by USP34, deubiquitinated downstream of beta-catenin stabilization step: deubiquitination is important Wnt signaling to positively regulate beta-catenin (CTNBB1)-mediated transcription. As to expression, expressed in brain and lymphoblast.

It localises to the cytoplasm. Inhibitor of the Wnt signaling pathway. Down-regulates beta-catenin. Probably facilitate the phosphorylation of beta-catenin and APC by GSK3B. This chain is Axin-2 (AXIN2), found in Homo sapiens (Human).